The following is a 473-amino-acid chain: Ribonuclease Y (473 aa).

Residues 4 to 24 (LIAFIILLILFVLLITIVPVV) traverse the membrane as a helical segment. In terms of domain architecture, KH spans 158–218 (SLFNIDIIDE…IRREIARIVM (61 aa)). In terms of domain architecture, HD spans 285–378 (ILSHSLEVAE…VKIVDTLSAA (94 aa)).

The protein belongs to the RNase Y family.

The protein resides in the cell membrane. In terms of biological role, endoribonuclease that initiates mRNA decay. In Ureaplasma parvum serovar 3 (strain ATCC 27815 / 27 / NCTC 11736), this protein is Ribonuclease Y.